Consider the following 378-residue polypeptide: Queuine tRNA-ribosyltransferase (378 aa).

The Proton acceptor role is filled by D91. Substrate is bound by residues 91–95 (DSGGF), D145, Q189, and G216. The RNA binding stretch occupies residues 247-253 (GVGKPED). The active-site Nucleophile is the D266. Positions 271–275 (TRNAR) are RNA binding; important for wobble base 34 recognition. Zn(2+)-binding residues include C304, C306, C309, and H335.

Belongs to the queuine tRNA-ribosyltransferase family. As to quaternary structure, homodimer. Within each dimer, one monomer is responsible for RNA recognition and catalysis, while the other monomer binds to the replacement base PreQ1. Requires Zn(2+) as cofactor.

The enzyme catalyses 7-aminomethyl-7-carbaguanine + guanosine(34) in tRNA = 7-aminomethyl-7-carbaguanosine(34) in tRNA + guanine. It participates in tRNA modification; tRNA-queuosine biosynthesis. Catalyzes the base-exchange of a guanine (G) residue with the queuine precursor 7-aminomethyl-7-deazaguanine (PreQ1) at position 34 (anticodon wobble position) in tRNAs with GU(N) anticodons (tRNA-Asp, -Asn, -His and -Tyr). Catalysis occurs through a double-displacement mechanism. The nucleophile active site attacks the C1' of nucleotide 34 to detach the guanine base from the RNA, forming a covalent enzyme-RNA intermediate. The proton acceptor active site deprotonates the incoming PreQ1, allowing a nucleophilic attack on the C1' of the ribose to form the product. After dissociation, two additional enzymatic reactions on the tRNA convert PreQ1 to queuine (Q), resulting in the hypermodified nucleoside queuosine (7-(((4,5-cis-dihydroxy-2-cyclopenten-1-yl)amino)methyl)-7-deazaguanosine). The chain is Queuine tRNA-ribosyltransferase from Vibrio atlanticus (strain LGP32) (Vibrio splendidus (strain Mel32)).